Here is a 582-residue protein sequence, read N- to C-terminus: Zinc finger protein 614 (582 aa).

The region spanning 8–79 is the KRAB domain; the sequence is LTLEDVAVEF…VAKIQNKNCP (72 aa). The C2H2-type 1 zinc-finger motif lies at 202 to 224; the sequence is HACIECEQTFLRKSQLIYHENIH. A C2H2-type 2; degenerate zinc finger spans residues 254–278; that stretch reads KICIPNEYRKGSTVNSRLIAHQQTH. C2H2-type zinc fingers lie at residues 284 to 306, 312 to 334, 340 to 362, 368 to 390, 396 to 418, 424 to 446, 452 to 474, 480 to 502, 508 to 530, and 536 to 558; these read YMCSECGKGFTMKRYLIAHQRTH, YVCNECGKGFTVKSNLIVHQRTH, YICSECGKGFTMKRYLVVHQRTH, YICSECGKGFTVKSNLIVHQRSH, YICSECGKGFTVKRTLIIHQRTH, YICNECGKGFTTKRTLIIHQRTH, YECNECGKAFSQKICLIQHERCH, FVCTECGKSYSHKYGLITHQRIH, YECNECGKAFTTKSVLNVHQRTH, and YGCSDCEKAFSHLSNLVKHKKMH.

Belongs to the krueppel C2H2-type zinc-finger protein family.

It localises to the nucleus. In terms of biological role, may be involved in transcriptional regulation. This Macaca fascicularis (Crab-eating macaque) protein is Zinc finger protein 614 (ZNF614).